Here is a 452-residue protein sequence, read N- to C-terminus: Lysine-rich nucleolar protein 1 (452 aa).

3 disordered regions span residues 1-28, 55-161, and 184-305; these read MITK…VKEP, VIQE…AFSG, and REQA…PDTD. A Glycyl lysine isopeptide (Lys-Gly) (interchain with G-Cter in SUMO2) cross-link involves residue lysine 7. Residues 65–75 show a composition bias toward basic residues; it reads LVKKKKKKKGH. Residues 78-98 are compositionally biased toward basic and acidic residues; sequence ICEEHLEPEITLRAGRTERSH. Residue serine 112 is modified to Phosphoserine. Lysine 126 participates in a covalent cross-link: Glycyl lysine isopeptide (Lys-Gly) (interchain with G-Cter in SUMO2). Residues 127-139 are compositionally biased toward basic and acidic residues; that stretch reads TSPDPRQDEEVTR. Serine 128 carries the post-translational modification Phosphoserine. 2 stretches are compositionally biased toward basic residues: residues 140–151 and 258–267; these read VGKKLKKHKKEK and SVKKKVKSKK. Residue serine 258 is modified to Phosphoserine. Lysine 280 is covalently cross-linked (Glycyl lysine isopeptide (Lys-Gly) (interchain with G-Cter in SUMO2)). Residues 293–305 are compositionally biased toward acidic residues; sequence VAEEPWEEEPDTD. The segment at 300–452 is interaction with ZNF106; sequence EEPDTDLEVV…NASKSIKFED (153 aa). Position 304 is a phosphothreonine (threonine 304). Residues lysine 313, lysine 347, lysine 367, lysine 369, and lysine 401 each participate in a glycyl lysine isopeptide (Lys-Gly) (interchain with G-Cter in SUMO2) cross-link. Omega-N-methylarginine is present on arginine 424. Lysine 436 is covalently cross-linked (Glycyl lysine isopeptide (Lys-Gly) (interchain with G-Cter in SUMO2)).

Interacts with ZNF106.

Its subcellular location is the nucleus. It localises to the nucleolus. The chain is Lysine-rich nucleolar protein 1 (KNOP1) from Bos taurus (Bovine).